The sequence spans 231 residues: Somatolactin-1 (231 aa).

A signal peptide spans 1 to 24; sequence MRMIRAIKQGQWAVLLWPYLLTAS. Disulfide bonds link C29–C39, C89–C205, and C222–C230. N-linked (GlcNAc...) asparagine glycosylation occurs at N145.

It belongs to the somatotropin/prolactin family. As to expression, pituitary gland.

The protein localises to the secreted. The polypeptide is Somatolactin-1 (Sparus aurata (Gilthead sea bream)).